Consider the following 528-residue polypeptide: Transcription factor cghF (528 aa).

Positions 232–283 (TPPNHATSSTPTSTRTPPTYHPHGPRPKSPLSSTPSPRTESTKSAAPSRDLA) are disordered. The span at 238–249 (TSSTPTSTRTPP) shows a compositional bias: low complexity. Residues 261–276 (PLSSTPSPRTESTKSA) show a composition bias toward polar residues.

It localises to the nucleus. Its function is as follows. Transcription factor that regulates the expression of the gene cluster that mediates the biosynthesis of the tetramic acid Sch210972, a potential anti-HIV fungal natural product that contains a decalin core. The chain is Transcription factor cghF from Chaetomium globosum (strain ATCC 6205 / CBS 148.51 / DSM 1962 / NBRC 6347 / NRRL 1970) (Soil fungus).